The sequence spans 666 residues: Non-receptor tyrosine-protein kinase TNK1 (666 aa).

Residues Ser-60 and Ser-96 each carry the phosphoserine modification. The region spanning 116–377 is the Protein kinase domain; sequence VCRGELLGSG…PSFSHLEGLL (262 aa). Residues 122-130 and Lys-148 each bind ATP; that span reads LGSGCFGVV. The active-site Proton acceptor is the Asp-245. Residues Ser-255 and Ser-411 each carry the phosphoserine modification. An SH3 domain is found at 380–445; that stretch reads AGPSEACCVR…PASAVTLADA (66 aa). A disordered region spans residues 446–493; that stretch reads GGLPATRPVHRGTPARGDQHPGSIDGDRKKANLWDAPPARGQRRNMPL. Ser-502 is modified (phosphoserine). Residues 506-579 form a disordered region; that stretch reads VLSLGPRPTG…MGMPGARKAA (74 aa). At Thr-514 the chain carries Phosphothreonine. A Phosphoserine modification is found at Ser-519. The segment covering 531-541 has biased composition (pro residues); it reads QGPPGLPPRPP. The span at 542–552 shows a compositional bias: low complexity; that stretch reads LSSSSPQPSQP. Ser-582 is modified (phosphoserine).

This sequence belongs to the protein kinase superfamily. Tyr protein kinase family. As to quaternary structure, interacts with the SH3 domain of PLCG1 via its Pro-rich domain. In terms of processing, autophosphorylated on tyrosine residues. As to expression, expressed in all umbilical cord blood, bone marrow and adult blood cell sub-populations and in several leukemia cell lines. Highly expressed in fetal blood, brain, lung, liver and kidney. Detected at lower levels in adult prostate, testis, ovary, small intestine and colon. Not expressed in adult lung, liver, kidney or brain.

Its subcellular location is the cytoplasm. It is found in the membrane. It carries out the reaction L-tyrosyl-[protein] + ATP = O-phospho-L-tyrosyl-[protein] + ADP + H(+). Involved in negative regulation of cell growth. Has tumor suppressor properties. Plays a negative regulatory role in the Ras-MAPK pathway. May function in signaling pathways utilized broadly during fetal development and more selectively in adult tissues and in cells of the lymphohematopoietic system. Could specifically be involved in phospholipid signal transduction. The protein is Non-receptor tyrosine-protein kinase TNK1 of Homo sapiens (Human).